Here is a 152-residue protein sequence, read N- to C-terminus: Large ribosomal subunit protein uL15 (152 aa).

Residues 18 to 37 (RVARGIGSGKGKTAGRGVKG) form a disordered region. Over residues 23–35 (IGSGKGKTAGRGV) the composition is skewed to gly residues.

The protein belongs to the universal ribosomal protein uL15 family. As to quaternary structure, part of the 50S ribosomal subunit.

Functionally, binds to the 23S rRNA. This is Large ribosomal subunit protein uL15 from Rickettsia bellii (strain OSU 85-389).